Reading from the N-terminus, the 64-residue chain is Conotoxin VnMLCL-033 (64 aa).

The first 19 residues, 1–19, serve as a signal peptide directing secretion; that stretch reads MLCLPVFIILLLLASPAAP. Residues 20 to 43 constitute a propeptide that is removed on maturation; that stretch reads NPLQTRIQSNLIRAGPEDANIKTD. Isoleucine amide is present on Ile-63.

The protein belongs to the conotoxin T superfamily. In terms of tissue distribution, expressed by the venom duct.

Its subcellular location is the secreted. This chain is Conotoxin VnMLCL-033, found in Conus ventricosus (Mediterranean cone).